The following is a 527-amino-acid chain: MQIKDISHLYNIIKTFLLYGIDEALPQHRYTRAIRCWRKTLFWLRNQHKDKTFGLRLRLALQELGPVWIKLGQMLSTRRDLFPPDIADELALLQDQVDPFDGKIARAQIEKALGAPLETWFDEFNETALASASIAQVHTAKFKQNAPHLENRLAGKEVVLKVLRPNIQQMINADLSLMYKVASWIPRIKAEGRRLRPVEVVREYEKNLRDELDLRREMANAIQLRANFENSPMLYIPEMYKQFCHQTVIVMERIYGIPVSNIEELHANGTNMKLLAERGVQVFFTQVFRDSFFHADMHPGNIFVNRAHPDDPQYIGIDCGIVGRLNDHDKRYLAESFVAFFNRDYRRVAEMHVASGWTPKDTNIDDFEQAFREVCEPIFAKPLSEISFGHVLLNLFNVAREYNMEVQPQLVLLQKTLLYIEGLGRQLYPQLDLWDTAKPFLQKWLDEQMGIKAFTKSVKQKLPYWREHLVDLPENVMDALAQQKIIADELIHLNRTLAKKRNIPHFTSFILGLCTGLAIWLLIYLLS.

Positions 123 to 527 constitute a Protein kinase domain; sequence EFNETALASA…AIWLLIYLLS (405 aa). ATP is bound by residues 129–137 and Lys-161; that span reads LASASIAQV. The active-site Proton acceptor is Asp-296. The chain crosses the membrane as a helical span at residues 506–526; sequence FTSFILGLCTGLAIWLLIYLL.

It belongs to the ABC1 family. UbiB subfamily.

Its subcellular location is the cell inner membrane. It participates in cofactor biosynthesis; ubiquinone biosynthesis [regulation]. Its function is as follows. Is probably a protein kinase regulator of UbiI activity which is involved in aerobic coenzyme Q (ubiquinone) biosynthesis. This chain is Probable protein kinase UbiB, found in Pasteurella multocida (strain Pm70).